A 361-amino-acid polypeptide reads, in one-letter code: Phospho-N-acetylmuramoyl-pentapeptide-transferase (361 aa).

The next 10 helical transmembrane spans lie at 26 to 46 (SILA…VLIQ), 73 to 93 (TMGG…WGDL), 98 to 118 (VWLV…DDWI), 139 to 159 (IFGL…AAVT), 168 to 188 (IALP…IVGF), 200 to 220 (GLAI…AYAS), 237 to 257 (AGDL…FLWF), 264 to 284 (VFMG…IAVI), 289 to 309 (LVLV…IIQV), and 339 to 359 (VIVR…ATLK).

Belongs to the glycosyltransferase 4 family. MraY subfamily. The cofactor is Mg(2+).

The protein resides in the cell inner membrane. It catalyses the reaction UDP-N-acetyl-alpha-D-muramoyl-L-alanyl-gamma-D-glutamyl-meso-2,6-diaminopimeloyl-D-alanyl-D-alanine + di-trans,octa-cis-undecaprenyl phosphate = di-trans,octa-cis-undecaprenyl diphospho-N-acetyl-alpha-D-muramoyl-L-alanyl-D-glutamyl-meso-2,6-diaminopimeloyl-D-alanyl-D-alanine + UMP. Its pathway is cell wall biogenesis; peptidoglycan biosynthesis. Its function is as follows. Catalyzes the initial step of the lipid cycle reactions in the biosynthesis of the cell wall peptidoglycan: transfers peptidoglycan precursor phospho-MurNAc-pentapeptide from UDP-MurNAc-pentapeptide onto the lipid carrier undecaprenyl phosphate, yielding undecaprenyl-pyrophosphoryl-MurNAc-pentapeptide, known as lipid I. This Xylella fastidiosa (strain 9a5c) protein is Phospho-N-acetylmuramoyl-pentapeptide-transferase.